Here is a 456-residue protein sequence, read N- to C-terminus: Adenylosuccinate synthetase isozyme 2 (456 aa).

A disordered region spans residues 1-24 (MAFAETYPAASSLPNGDCGRPRAR). Residues 39–45 (GDEGKGK) and 67–69 (GHT) each bind GTP. Aspartate 40 (proton acceptor) is an active-site residue. Residues aspartate 40 and glycine 67 each contribute to the Mg(2+) site. Substrate is bound at residue aspartate 40. IMP contacts are provided by residues 40–43 (DEGK), 65–68 (NAGH), threonine 162, arginine 176, asparagine 255, threonine 270, and arginine 334. Histidine 68 serves as the catalytic Proton donor. 330 to 336 (VTTGRKR) serves as a coordination point for substrate. Residues arginine 336, 362 to 364 (KLD), and 444 to 447 (GVGK) contribute to the GTP site.

This sequence belongs to the adenylosuccinate synthetase family. As to quaternary structure, homodimer. Mg(2+) is required as a cofactor.

It is found in the cytoplasm. The protein resides in the mitochondrion. The enzyme catalyses IMP + L-aspartate + GTP = N(6)-(1,2-dicarboxyethyl)-AMP + GDP + phosphate + 2 H(+). It participates in purine metabolism; AMP biosynthesis via de novo pathway; AMP from IMP: step 1/2. Inhibited competitively by AMP and IMP and non-competitively by fructose 1,6-bisphosphate. Its function is as follows. Plays an important role in the de novo pathway and in the salvage pathway of purine nucleotide biosynthesis. Catalyzes the first committed step in the biosynthesis of AMP from IMP. In Homo sapiens (Human), this protein is Adenylosuccinate synthetase isozyme 2.